The primary structure comprises 160 residues: MAEKTYVMTLAEKKQLEAELEEYKLVRRPEVVERIKIARSYGDLSENSEYEAAKDEQAFIEGQIQILETKIRYAEIVDSDAVANDEVAIGKTVVVQEVGTSDKDTYHIVGAAGADIFSGKISNESPIAQALIGKKVGDKVAIESPAGSYSVEILSVEKTS.

The stretch at 1-72 (MAEKTYVMTL…QIQILETKIR (72 aa)) forms a coiled coil.

Belongs to the GreA/GreB family.

Functionally, necessary for efficient RNA polymerase transcription elongation past template-encoded arresting sites. The arresting sites in DNA have the property of trapping a certain fraction of elongating RNA polymerases that pass through, resulting in locked ternary complexes. Cleavage of the nascent transcript by cleavage factors such as GreA or GreB allows the resumption of elongation from the new 3'terminus. GreA releases sequences of 2 to 3 nucleotides. This is Transcription elongation factor GreA from Streptococcus thermophilus (strain CNRZ 1066).